The primary structure comprises 247 residues: Transmembrane protein 69 (247 aa).

The next 5 helical transmembrane spans lie at 97-117 (ALCV…VMLM), 122-142 (IPIL…FLGG), 159-179 (YLNL…FLIS), 185-205 (AIVT…FLLP), and 216-236 (IVVT…KSSF).

It is found in the membrane. This is Transmembrane protein 69 (TMEM69) from Homo sapiens (Human).